The following is a 282-amino-acid chain: 2-dehydro-3-deoxyphosphooctonate aldolase (282 aa).

The protein belongs to the KdsA family.

It is found in the cytoplasm. It catalyses the reaction D-arabinose 5-phosphate + phosphoenolpyruvate + H2O = 3-deoxy-alpha-D-manno-2-octulosonate-8-phosphate + phosphate. It functions in the pathway carbohydrate biosynthesis; 3-deoxy-D-manno-octulosonate biosynthesis; 3-deoxy-D-manno-octulosonate from D-ribulose 5-phosphate: step 2/3. It participates in bacterial outer membrane biogenesis; lipopolysaccharide biosynthesis. The chain is 2-dehydro-3-deoxyphosphooctonate aldolase from Shewanella sp. (strain W3-18-1).